Here is a 222-residue protein sequence, read N- to C-terminus: ATP-dependent dethiobiotin synthetase BioD (222 aa).

An ATP-binding site is contributed by 12-17; it reads DAGKTV. T16 provides a ligand contact to Mg(2+). Residue K37 is part of the active site. S41 is a substrate binding site. Residues D54, 116–119, 176–177, 206–208, and E213 contribute to the ATP site; these read EGAG, VQ, and PYL. Mg(2+) contacts are provided by D54 and E116.

This sequence belongs to the dethiobiotin synthetase family. As to quaternary structure, homodimer. Mg(2+) is required as a cofactor.

Its subcellular location is the cytoplasm. It catalyses the reaction (7R,8S)-7,8-diammoniononanoate + CO2 + ATP = (4R,5S)-dethiobiotin + ADP + phosphate + 3 H(+). It functions in the pathway cofactor biosynthesis; biotin biosynthesis; biotin from 7,8-diaminononanoate: step 1/2. In terms of biological role, catalyzes a mechanistically unusual reaction, the ATP-dependent insertion of CO2 between the N7 and N8 nitrogen atoms of 7,8-diaminopelargonic acid (DAPA, also called 7,8-diammoniononanoate) to form a ureido ring. This is ATP-dependent dethiobiotin synthetase BioD from Idiomarina loihiensis (strain ATCC BAA-735 / DSM 15497 / L2-TR).